We begin with the raw amino-acid sequence, 97 residues long: Class II hydrophobin 1 (97 aa).

The N-terminal stretch at 1–16 (MKFFAIAALFAAAAVA) is a signal peptide. Residues 17–22 (QPLEDR) constitute a propeptide that is removed on maturation. Cystine bridges form between C30-C79, C40-C70, C41-C53, and C80-C91.

It belongs to the cerato-ulmin hydrophobin family. In terms of assembly, homotetramer. Further self-assembles to form highly ordered films at water-air interfaces through intermolecular interactions.

The protein localises to the secreted. It is found in the cell wall. Its function is as follows. Aerial growth, conidiation, and dispersal of filamentous fungi in the environment rely upon a capability of their secreting small amphipathic proteins called hydrophobins (HPBs) with low sequence identity. Class I can self-assemble into an outermost layer of rodlet bundles on aerial cell surfaces, conferring cellular hydrophobicity that supports fungal growth, development and dispersal; whereas Class II form highly ordered films at water-air interfaces through intermolecular interactions but contribute nothing to the rodlet structure. Hbf1 is a class II hydrophobin that has a role in hyphal development and is in particular required for the formation of aerial hyphae. In Hypocrea jecorina (Trichoderma reesei), this protein is Class II hydrophobin 1.